We begin with the raw amino-acid sequence, 876 residues long: Probable inactive ATP-dependent zinc metalloprotease FTSHI 2, chloroplastic (876 aa).

The disordered stretch occupies residues 1-20; sequence MACRFPLHSSSPSQFLSPEN. A chloroplast-targeting transit peptide spans 1–32; the sequence is MACRFPLHSSSPSQFLSPENRQRLPRNYPSIS. Polar residues predominate over residues 8-19; that stretch reads HSSSPSQFLSPE. Residues 59–79 form a helical membrane-spanning segment; sequence LLAIPITLTIISASLAKPSFA. Residues 256–276 are disordered; sequence TMKAQKKQQERKKRKAVRKKK. A compositionally biased stretch (basic residues) spans 258–275; sequence KAQKKQQERKKRKAVRKK. The helical transmembrane segment at 304–324 threads the bilayer; it reads VATALGLVFFYIFYRVVVLNY. Residues 350-370 form a disordered region; the sequence is ELEREMEGIEEEDEEVEEGTG. A compositionally biased stretch (acidic residues) spans 357–368; it reads GIEEEDEEVEEG. 450-457 provides a ligand contact to ATP; that stretch reads GPPGVGKT.

This sequence in the N-terminal section; belongs to the AAA ATPase family. In the C-terminal section; belongs to the peptidase M41 family. As to quaternary structure, homooligomer. Interacts with FtsHi4.

It is found in the plastid. Its subcellular location is the chloroplast membrane. Required for plastid development during embryogenesis. Might be involved in chaperone functions or play a structural role in the thylakoid FtsH complex. This is Probable inactive ATP-dependent zinc metalloprotease FTSHI 2, chloroplastic from Arabidopsis thaliana (Mouse-ear cress).